We begin with the raw amino-acid sequence, 644 residues long: Protein cueball (644 aa).

A signal peptide spans 1 to 26 (MIRIRFGMDVLLVLLLATCLLSPAHG). Over 27–531 (TPLEWDFAVT…VCLTPKVWTS (505 aa)) the chain is Extracellular. 2 N-linked (GlcNAc...) asparagine glycosylation sites follow: Asn82 and Asn108. LDL-receptor class B repeat units follow at residues 121 to 166 (MNLF…DVCR), 167 to 211 (RKLY…DQLS), and 212 to 257 (DRLF…TNDA). Asn175, Asn190, and Asn196 each carry an N-linked (GlcNAc...) asparagine glycan. N-linked (GlcNAc...) asparagine glycosylation is present at Asn313. EGF-like domains lie at 398–430 (EIRECHNYCVHGTCQMSESAYPKCYCQPGFTGE) and 433–471 (EVSVCAGLCLNGGHCRASKDEKEAPSCECPAKFGGARCE). 5 cysteine pairs are disulfide-bonded: Cys402–Cys411, Cys406–Cys421, Cys437–Cys447, Cys441–Cys459, and Cys461–Cys470. 2 N-linked (GlcNAc...) asparagine glycosylation sites follow: Asn473 and Asn508. Residues 532–552 (SVIIILVIGIVSSLLLVAVIV) form a helical membrane-spanning segment. Residues 553–644 (HGIRRLYKPK…LIHNMEDDLY (92 aa)) are Cytoplasmic-facing.

The protein belongs to the cueball family.

The protein localises to the cell membrane. In terms of biological role, has a role in spermatogenesis and oogenesis. The polypeptide is Protein cueball (Drosophila erecta (Fruit fly)).